Reading from the N-terminus, the 158-residue chain is Endoribonuclease YbeY (158 aa).

Positions 114, 118, and 124 each coordinate Zn(2+).

Belongs to the endoribonuclease YbeY family. It depends on Zn(2+) as a cofactor.

The protein resides in the cytoplasm. Functionally, single strand-specific metallo-endoribonuclease involved in late-stage 70S ribosome quality control and in maturation of the 3' terminus of the 16S rRNA. In Legionella pneumophila (strain Paris), this protein is Endoribonuclease YbeY.